Consider the following 78-residue polypeptide: Ubiquinol-cytochrome-c reductase complex assembly factor 3 (78 aa).

The Mitochondrial matrix portion of the chain corresponds to Met-1–Arg-5. Residues Ile-6 to Pro-26 traverse the membrane as a helical segment. Residues Gly-27 to Lys-78 are Mitochondrial intermembrane-facing.

This sequence belongs to the UQCC3 family. In terms of assembly, associates with the ubiquinol-cytochrome c reductase complex (mitochondrial respiratory chain complex III or cytochrome b-c1 complex).

It localises to the mitochondrion inner membrane. Its function is as follows. Required for the assembly of the ubiquinol-cytochrome c reductase complex (mitochondrial respiratory chain complex III or cytochrome b-c1 complex), mediating cytochrome b recruitment and probably stabilization within the complex. Thereby, plays an important role in ATP production by mitochondria. Cardiolipin-binding protein, it may also control the cardiolipin composition of mitochondria membranes and their morphology. The protein is Ubiquinol-cytochrome-c reductase complex assembly factor 3 of Danio rerio (Zebrafish).